We begin with the raw amino-acid sequence, 145 residues long: SsrA-binding protein (145 aa).

The protein belongs to the SmpB family.

It is found in the cytoplasm. Its function is as follows. Required for rescue of stalled ribosomes mediated by trans-translation. Binds to transfer-messenger RNA (tmRNA), required for stable association of tmRNA with ribosomes. tmRNA and SmpB together mimic tRNA shape, replacing the anticodon stem-loop with SmpB. tmRNA is encoded by the ssrA gene; the 2 termini fold to resemble tRNA(Ala) and it encodes a 'tag peptide', a short internal open reading frame. During trans-translation Ala-aminoacylated tmRNA acts like a tRNA, entering the A-site of stalled ribosomes, displacing the stalled mRNA. The ribosome then switches to translate the ORF on the tmRNA; the nascent peptide is terminated with the 'tag peptide' encoded by the tmRNA and targeted for degradation. The ribosome is freed to recommence translation, which seems to be the essential function of trans-translation. In Mycoplasma genitalium (strain ATCC 33530 / DSM 19775 / NCTC 10195 / G37) (Mycoplasmoides genitalium), this protein is SsrA-binding protein.